The chain runs to 512 residues: Ribonuclease Y (512 aa).

A helical transmembrane segment spans residues 2–22 (VGMYIIIPIVTFIIGGLLAWL). The region spanning 202–262 (SITVFHIESD…VRREIARLAL (61 aa)) is the KH domain. One can recognise an HD domain in the interval 328–421 (LLQHARETAN…VQVCDAISGA (94 aa)).

Belongs to the RNase Y family.

The protein localises to the cell membrane. In terms of biological role, endoribonuclease that initiates mRNA decay. The polypeptide is Ribonuclease Y (Parabacteroides distasonis (strain ATCC 8503 / DSM 20701 / CIP 104284 / JCM 5825 / NCTC 11152)).